The sequence spans 380 residues: Tryptophan 2,3-dioxygenase (380 aa).

Substrate contacts are provided by residues F57–H61 and R128. H313 lines the heme pocket. Position 328 (T328) interacts with substrate.

The protein belongs to the tryptophan 2,3-dioxygenase family. As to quaternary structure, homotetramer. Dimer of dimers. Heme serves as cofactor.

The catalysed reaction is L-tryptophan + O2 = N-formyl-L-kynurenine. It participates in amino-acid degradation; L-tryptophan degradation via kynurenine pathway; L-kynurenine from L-tryptophan: step 1/2. It functions in the pathway pigment biosynthesis; ommochrome biosynthesis. Its function is as follows. Heme-dependent dioxygenase that catalyzes the oxidative cleavage of the L-tryptophan (L-Trp) pyrrole ring and converts L-tryptophan to N-formyl-L-kynurenine. Catalyzes the oxidative cleavage of the indole moiety. The polypeptide is Tryptophan 2,3-dioxygenase (Drosophila persimilis (Fruit fly)).